Consider the following 351-residue polypeptide: ADP-glucose phosphorylase (351 aa).

Positions 1-63 (MTSPSHASDR…QNPNPKPSSC (63 aa)) are disordered. 41–44 (RAKR) serves as a coordination point for ADP-alpha-D-glucose. Zn(2+) contacts are provided by cysteine 63 and cysteine 66. Residues 72–74 (ECA) and asparagine 94 contribute to the ADP-alpha-D-glucose site. Residue histidine 133 coordinates Zn(2+). ADP-alpha-D-glucose is bound by residues asparagine 173 and 179 to 182 (GASM). Histidine 184 contacts Zn(2+). Catalysis depends on histidine 186, which acts as the Tele-AMP-histidine intermediate. Position 188 (glutamine 188) interacts with ADP-alpha-D-glucose. Zn(2+) is bound by residues cysteine 216, cysteine 219, histidine 255, and histidine 310. ADP-alpha-D-glucose contacts are provided by residues glycine 321 and 325 to 326 (FE).

The protein belongs to the galactose-1-phosphate uridylyltransferase type 1 family. Homodimer. The cofactor is Zn(2+).

The enzyme catalyses alpha-D-glucose 1-phosphate + ADP + H(+) = ADP-alpha-D-glucose + phosphate. Catalyzes the conversion of ADP-glucose and inorganic phosphate (Pi) into glucose-1-phosphate and ADP. Does not possess galactose-1-phosphate uridylyltransferase activity. The sequence is that of ADP-glucose phosphorylase from Arabidopsis thaliana (Mouse-ear cress).